The following is a 180-amino-acid chain: MAREVVDAMTMRRALTRITYEIIEQNKGVGNLVFIGIKTRGIFLAQRLAQRLKQLEGVDVPVGSLDITLYRDDHHAVDVAGQAKLNGADIPVDINGKHVILVDDVLFTGRTVRAALDALMDHGRPAKISLAVLVDRGHRELPIRPDFIGKNIPTALDEQVSVALEEHDGHDGISIEKLEE.

Residues 39-40 (TR), 103-111 (DDVLFTGRT), Arg136, and Val160 each bind substrate. The PRPP-binding signature appears at 99–111 (VILVDDVLFTGRT).

It belongs to the purine/pyrimidine phosphoribosyltransferase family. PyrR subfamily. As to quaternary structure, homodimer and homohexamer; in equilibrium.

It carries out the reaction UMP + diphosphate = 5-phospho-alpha-D-ribose 1-diphosphate + uracil. In terms of biological role, regulates transcriptional attenuation of the pyrimidine nucleotide (pyr) operon by binding in a uridine-dependent manner to specific sites on pyr mRNA. This disrupts an antiterminator hairpin in the RNA and favors formation of a downstream transcription terminator, leading to a reduced expression of downstream genes. Its function is as follows. Also displays a weak uracil phosphoribosyltransferase activity which is not physiologically significant. In Lactiplantibacillus plantarum (strain ATCC BAA-793 / NCIMB 8826 / WCFS1) (Lactobacillus plantarum), this protein is Bifunctional protein PyrR 1 (pyrR1).